The primary structure comprises 521 residues: Formate--tetrahydrofolate ligase (521 aa).

Belongs to the formate--tetrahydrofolate ligase family.

It catalyses the reaction (6S)-5,6,7,8-tetrahydrofolate + formate + ATP = (6R)-10-formyltetrahydrofolate + ADP + phosphate. Its pathway is one-carbon metabolism; tetrahydrofolate interconversion. This chain is Formate--tetrahydrofolate ligase, found in Ureaplasma parvum serovar 3 (strain ATCC 700970).